The following is a 329-amino-acid chain: MEPITIPTDRDGVAYLYGHPLRNSLSPPLHQTVYNALGLNWTQIPLSTATGTSFTRSPEISTFLSSVRSNPKFVGSSVTMPWKVAIMPHLDDLTEDARQAGACNTIYLRKEDDGKTQYVGTNTDCIGIREALLQGSPNGAEHFKGKPALIVGGGGTARTAIYVLRKWLGVSKIYIVNRDAKEVEAILAEDKQRNPSPQVALVPVSDPSAAATLEAPVAVVSGIPNYPPQTEEEIRARETLRVFLNRQTHEKDQGVILEMCYHPLPWTDIAQIAQDARWKVILGSEALIWQGLEQARLWTGKDVVSEPGLVEKVQAFVAQTIAERSKSNL.

The catalysed reaction is L-quinate + NAD(+) = 3-dehydroquinate + NADH + H(+). It participates in aromatic compound metabolism; 3,4-dihydroxybenzoate biosynthesis; 3-dehydroquinate from D-quinate (NAD(+) route): step 1/1. The chain is Quinate dehydrogenase (qutB) from Emericella nidulans (strain FGSC A4 / ATCC 38163 / CBS 112.46 / NRRL 194 / M139) (Aspergillus nidulans).